Here is a 206-residue protein sequence, read N- to C-terminus: Lipid A acyltransferase PagP (206 aa).

Positions 1 to 22 (MKQMVCWLTAGLLTLGGLPARA) are cleaved as a signal peptide. Low complexity predominate over residues 26-46 (VPAVPETPAAPAAPAVQETPA). The tract at residues 26 to 50 (VPAVPETPAAPAAPAVQETPASSAA) is disordered. Residues His80, Asp123, and Ser124 contribute to the active site.

The protein belongs to the lipid A palmitoyltransferase family. As to quaternary structure, homodimer.

It localises to the cell outer membrane. The catalysed reaction is a lipid A + a 1,2-diacyl-sn-glycero-3-phosphocholine = a hepta-acyl lipid A + a 2-acyl-sn-glycero-3-phosphocholine. The enzyme catalyses a lipid IVA + a 1,2-diacyl-sn-glycero-3-phosphocholine = a lipid IVB + a 2-acyl-sn-glycero-3-phosphocholine. It carries out the reaction a lipid IIA + a 1,2-diacyl-sn-glycero-3-phosphocholine = a lipid IIB + a 2-acyl-sn-glycero-3-phosphocholine. Its function is as follows. Transfers a fatty acid residue from the sn-1 position of a phospholipid to the N-linked hydroxyfatty acid chain on the proximal unit of lipid A or its precursors. In Laribacter hongkongensis (strain HLHK9), this protein is Lipid A acyltransferase PagP.